Reading from the N-terminus, the 144-residue chain is MNFLGTYTPKLDEKGRLFLPAKFRDRLAEGLVVTQGQENCLVVWPTDVFMEEARRAQATPMTVRGARDYARVLFAGADEGALDKQGRINIAAPLREYAALDREVVVIGVMDRIEIWDPVRWREYSAGAQAKFAELDEQPAHTSG.

SpoVT-AbrB domains are found at residues 6–48 and 77–120; these read TYTP…PTDV and ADEG…DPVR.

The protein belongs to the MraZ family. In terms of assembly, forms oligomers.

The protein resides in the cytoplasm. It is found in the nucleoid. The chain is Transcriptional regulator MraZ from Nocardioides sp. (strain ATCC BAA-499 / JS614).